The following is an 89-amino-acid chain: MSRSIKKGPFVDKNLFKKIQAGDNKHQIKTYSRASTIIPEMIGFTINVHNGKTFVAVYIQENMIGHKLGEFAPTRKFISHAGAAKVGKK.

This sequence belongs to the universal ribosomal protein uS19 family.

Its function is as follows. Protein S19 forms a complex with S13 that binds strongly to the 16S ribosomal RNA. The protein is Small ribosomal subunit protein uS19 of Brachyspira hyodysenteriae (strain ATCC 49526 / WA1).